Reading from the N-terminus, the 879-residue chain is Alanine--tRNA ligase (879 aa).

Residues histidine 566, histidine 570, cysteine 668, and histidine 672 each coordinate Zn(2+).

This sequence belongs to the class-II aminoacyl-tRNA synthetase family. Zn(2+) is required as a cofactor.

It is found in the cytoplasm. The catalysed reaction is tRNA(Ala) + L-alanine + ATP = L-alanyl-tRNA(Ala) + AMP + diphosphate. Its function is as follows. Catalyzes the attachment of alanine to tRNA(Ala) in a two-step reaction: alanine is first activated by ATP to form Ala-AMP and then transferred to the acceptor end of tRNA(Ala). Also edits incorrectly charged Ser-tRNA(Ala) and Gly-tRNA(Ala) via its editing domain. In Clostridium botulinum (strain Loch Maree / Type A3), this protein is Alanine--tRNA ligase.